The sequence spans 1123 residues: Proline-, glutamic acid- and leucine-rich protein 1 (1123 aa).

The residue at position 2 (A2) is an N-acetylalanine. Residues 2-80 are required for modulation of ESR1 transcriptional activity; that stretch reads AAAVLSGASA…CLLRLHGTAG (79 aa). Phosphoserine is present on S13. 9 consecutive short sequence motifs (LXXLL motif) follow at residues 33–37, 69–73, 111–115, 155–159, 177–181, 264–268, 271–275, 365–369, and 460–464; these read LRLLL, LMCLL, LLSLL, LRDLL, LPGLL, LHSLL, and LTHLL. Positions 121-189 are required for modulation of ESR1 transcriptional activity; it reads TELFQQHCVS…LLTSLLGLRP (69 aa). Phosphoserine is present on residues S478 and S482. 2 short sequence motifs (LXXLL motif) span residues 580–584 and 585–589; these read LYRLL and LALLL. Disordered regions lie at residues 639-767 and 779-1123; these read LQSS…GRVP and ASDV…EPDS. A compositionally biased stretch (pro residues) spans 646 to 657; it reads CPTPAPVPPPEA. Position 751 is a phosphothreonine (T751). S755 bears the Phosphoserine mark. Over residues 780–792 the composition is skewed to acidic residues; it reads SDVEISLESDSDD. Pro residues-rich tracts occupy residues 803–829 and 840–865; these read SLPPAPPSGTPPPAAPAGPPTASPPVP and TPGPPPPPPPPPPPASGPVTLPPPQL. Positions 891–962 are enriched in acidic residues; the sequence is SDEEEEEEEE…EELDEVEDVE (72 aa). A compositionally biased stretch (pro residues) spans 973-987; the sequence is GPPPPTLPPALPPSD. Residues S1029 and S1039 each carry the phosphoserine modification.

Belongs to the RIX1/PELP1 family. As to quaternary structure, interacts with HRS, RXRA, SUMO2, HDAC2, RB1 and STAT3. Interacts with PI3K, SRC and EGFR in cytoplasm. Interacts with ESR1, the interaction is enhanced by 17-beta-estradiol; the interaction increases ESR1 transcriptional activity. Interacts with CREBBP and EP300 in a ligand-dependent manner. Forms two complexes in the presence of 17-beta-estradiol; one with SRC and ESR1 and another with LCK and ESR1. Interacts with histone H1 and H3 with a greater affinity for H1. Component of some MLL1/MLL complex, at least composed of the core components KMT2A/MLL1, ASH2L, HCFC1/HCF1, WDR5 and RBBP5, as well as the facultative components BACC1, CHD8, E2F6, HSP70, INO80C, KANSL1, LAS1L, MAX, MCRS1, MGA, KAT8/MOF, PELP1, PHF20, PRP31, RING2, RUVB1/TIP49A, RUVB2/TIP49B, SENP3, TAF1, TAF4, TAF6, TAF7, TAF9 and TEX10. Core component of the 5FMC complex, at least composed of PELP1, LAS1L, TEX10, WDR18 and SENP3; the complex interacts with methylated CHTOP and ZNF148. Interacts with NOL9. Interacts with BCAS3. Component of the PELP1 complex, composed of at least PELP1, TEX10 and WDR18. The complex interacts (via PELP1) with MDN1 (via its hexameric AAA ATPase ring) and the pre-60S ribosome particles. In terms of processing, transiently sumoylated, preferentially conjugated to SUMO2 or SUMO3. Sumoylation causes nucleolar exclusion of PELP1 and promotes the recruitment of MDN1 to pre-60S particles. Desumoylation by SUMO isopeptidase SENP3 is needed to release both PELP1 and MDN1 from pre-ribosomes. Widely expressed with high levels in testis, ovary, uterus and pituitary gland.

It localises to the nucleus. Its subcellular location is the nucleolus. It is found in the nucleoplasm. The protein localises to the cytoplasm. Functionally, coactivator of estrogen receptor-mediated transcription and a corepressor of other nuclear hormone receptors and sequence-specific transcription factors. Plays a role in estrogen receptor (ER) genomic activity when present in the nuclear compartment by activating the ER target genes in a hormonal stimulation dependent manner. Can facilitate ER non-genomic signaling via SRC and PI3K interaction in the cytosol. Plays a role in E2-mediated cell cycle progression by interacting with RB1. May have important functional implications in ER/growth factor cross-talk. Interacts with several growth factor signaling components including EGFR and HRS. Functions as the key stabilizing component of the Five Friends of Methylated CHTOP (5FMC) complex; the 5FMC complex is recruited to ZNF148 by methylated CHTOP, leading to desumoylation of ZNF148 and subsequent transactivation of ZNF148 target genes. Component of the PELP1 complex involved in the nucleolar steps of 28S rRNA maturation and the subsequent nucleoplasmic transit of the pre-60S ribosomal subunit. Regulates pre-60S association of the critical remodeling factor MDN1. In Mus musculus (Mouse), this protein is Proline-, glutamic acid- and leucine-rich protein 1 (Pelp1).